A 549-amino-acid polypeptide reads, in one-letter code: Glucose-6-phosphate isomerase (549 aa).

The Proton donor role is filled by Glu355. Residues His386 and Lys514 contribute to the active site.

The protein belongs to the GPI family.

The protein resides in the cytoplasm. It carries out the reaction alpha-D-glucose 6-phosphate = beta-D-fructose 6-phosphate. It functions in the pathway carbohydrate biosynthesis; gluconeogenesis. The protein operates within carbohydrate degradation; glycolysis; D-glyceraldehyde 3-phosphate and glycerone phosphate from D-glucose: step 2/4. Catalyzes the reversible isomerization of glucose-6-phosphate to fructose-6-phosphate. The polypeptide is Glucose-6-phosphate isomerase (Salmonella paratyphi A (strain AKU_12601)).